The chain runs to 905 residues: Protein translocase subunit SecA (905 aa).

ATP is bound by residues Gln87, 105 to 109 (GEGKT), and Asp512. The interval 836–905 (DVDAVDEQRK…KKYKHCHGKL (70 aa)) is disordered. Positions 841-858 (DEQRKAADSAPREFRHEQ) are enriched in basic and acidic residues. Zn(2+) contacts are provided by Cys890, Cys892, Cys901, and His902. The span at 896 to 905 (KKYKHCHGKL) shows a compositional bias: basic residues.

Belongs to the SecA family. As to quaternary structure, monomer and homodimer. Part of the essential Sec protein translocation apparatus which comprises SecA, SecYEG and auxiliary proteins SecDF-YajC and YidC. Zn(2+) is required as a cofactor.

It is found in the cell inner membrane. Its subcellular location is the cytoplasm. It catalyses the reaction ATP + H2O + cellular proteinSide 1 = ADP + phosphate + cellular proteinSide 2.. Part of the Sec protein translocase complex. Interacts with the SecYEG preprotein conducting channel. Has a central role in coupling the hydrolysis of ATP to the transfer of proteins into and across the cell membrane, serving both as a receptor for the preprotein-SecB complex and as an ATP-driven molecular motor driving the stepwise translocation of polypeptide chains across the membrane. In Idiomarina loihiensis (strain ATCC BAA-735 / DSM 15497 / L2-TR), this protein is Protein translocase subunit SecA.